A 790-amino-acid polypeptide reads, in one-letter code: DNA topoisomerase 1 (790 aa).

Polar residues-rich tracts occupy residues 1–18 (MKSN…SNVM), 44–54 (KLSSGALNGNS), and 61–70 (SNLSCPSPYT). The disordered stretch occupies residues 1–196 (MKSNPGITVI…KKRPDVSASV (196 aa)). Over residues 158 to 167 (QEEAAADDDP) the composition is skewed to acidic residues. Polar residues predominate over residues 168–181 (SISNRNKKSTTPAS). Interaction with DNA stretches follow at residues 426–427 (KY), 490–495 (RAGNEK), and 581–583 (TAK). The 358-residue stretch at 433–790 (SSSLKGKVTR…AMDVVLIFRF (358 aa)) folds into the Topo IB-type catalytic domain. Residue Tyr-749 is the O-(3'-phospho-DNA)-tyrosine intermediate of the active site.

It belongs to the type IB topoisomerase family.

The protein localises to the nucleus. It carries out the reaction ATP-independent breakage of single-stranded DNA, followed by passage and rejoining.. Its function is as follows. Releases the supercoiling and torsional tension of DNA introduced during the DNA replication and transcription by transiently cleaving and rejoining one strand of the DNA duplex. Introduces a single-strand break via transesterification at a target site in duplex DNA. The scissile phosphodiester is attacked by the catalytic tyrosine of the enzyme, resulting in the formation of a DNA-(3'-phosphotyrosyl)-enzyme intermediate and the expulsion of a 5'-OH DNA strand. The free DNA strand then rotates around the intact phosphodiester bond on the opposing strand, thus removing DNA supercoils. Finally, in the religation step, the DNA 5'-OH attacks the covalent intermediate to expel the active-site tyrosine and restore the DNA phosphodiester backbone. The polypeptide is DNA topoisomerase 1 (TOP1) (Daucus carota (Wild carrot)).